The chain runs to 383 residues: Putative F-box/kelch-repeat protein At1g62270 (383 aa).

An F-box domain is found at 6 to 51; it reads TSSFSSLPWDLVEDILARVPATSLKRLRSTCKQWNFLFNDQIFTKM. Kelch repeat units lie at residues 110–158, 160–211, and 349–383; these read KVFH…YGNY, SCYN…LRGN, and TVYI…LVQI.

The protein is Putative F-box/kelch-repeat protein At1g62270 of Arabidopsis thaliana (Mouse-ear cress).